A 211-amino-acid polypeptide reads, in one-letter code: Ribosomal RNA large subunit methyltransferase E (211 aa).

S-adenosyl-L-methionine contacts are provided by Gly-55, Trp-57, Asp-75, Asp-93, and Asp-117. Lys-157 acts as the Proton acceptor in catalysis.

The protein belongs to the class I-like SAM-binding methyltransferase superfamily. RNA methyltransferase RlmE family.

It is found in the cytoplasm. The enzyme catalyses uridine(2552) in 23S rRNA + S-adenosyl-L-methionine = 2'-O-methyluridine(2552) in 23S rRNA + S-adenosyl-L-homocysteine + H(+). Specifically methylates the uridine in position 2552 of 23S rRNA at the 2'-O position of the ribose in the fully assembled 50S ribosomal subunit. The protein is Ribosomal RNA large subunit methyltransferase E of Methanothermobacter thermautotrophicus (strain ATCC 29096 / DSM 1053 / JCM 10044 / NBRC 100330 / Delta H) (Methanobacterium thermoautotrophicum).